We begin with the raw amino-acid sequence, 398 residues long: Arginine biosynthesis bifunctional protein ArgJ (398 aa).

Positions 148, 174, 185, 271, 393, and 398 each coordinate substrate. The Nucleophile role is filled by Thr185.

This sequence belongs to the ArgJ family. In terms of assembly, heterotetramer of two alpha and two beta chains.

Its subcellular location is the cytoplasm. The enzyme catalyses N(2)-acetyl-L-ornithine + L-glutamate = N-acetyl-L-glutamate + L-ornithine. The catalysed reaction is L-glutamate + acetyl-CoA = N-acetyl-L-glutamate + CoA + H(+). It participates in amino-acid biosynthesis; L-arginine biosynthesis; L-ornithine and N-acetyl-L-glutamate from L-glutamate and N(2)-acetyl-L-ornithine (cyclic): step 1/1. It functions in the pathway amino-acid biosynthesis; L-arginine biosynthesis; N(2)-acetyl-L-ornithine from L-glutamate: step 1/4. Its function is as follows. Catalyzes two activities which are involved in the cyclic version of arginine biosynthesis: the synthesis of N-acetylglutamate from glutamate and acetyl-CoA as the acetyl donor, and of ornithine by transacetylation between N(2)-acetylornithine and glutamate. The sequence is that of Arginine biosynthesis bifunctional protein ArgJ from Listeria monocytogenes serotype 4b (strain F2365).